Reading from the N-terminus, the 182-residue chain is Ribosome maturation factor RimP (182 aa).

The protein belongs to the RimP family.

The protein resides in the cytoplasm. Functionally, required for maturation of 30S ribosomal subunits. The protein is Ribosome maturation factor RimP of Corynebacterium efficiens (strain DSM 44549 / YS-314 / AJ 12310 / JCM 11189 / NBRC 100395).